We begin with the raw amino-acid sequence, 258 residues long: MAKNAPAPRGARRKPVKKVGVPLRERVATAVPWMLVGSVAMVSLLAVIYLPAALDGYPIRKVGVDGVTDVRRQQQIETALAALVREENYFSVPLEEIYQQSQGLSWVEEVSVRRQWPDTVVLTVEERRPVAVWNESVLVSDSGQPFKALKQYDLDDLPHLNGPEQRLEEVMGFYHSMGKTLADVDLSIRSMEVNARLTARLTLNNDMELVVDREHYTTKLRRFVRLYRGVLNTDSRQVARVDLRYADGMAVTWREQQS.

Topologically, residues 1–29 (MAKNAPAPRGARRKPVKKVGVPLRERVAT) are cytoplasmic. The chain crosses the membrane as a helical span at residues 30–50 (AVPWMLVGSVAMVSLLAVIYL). Residues 51–258 (PAALDGYPIR…MAVTWREQQS (208 aa)) lie on the Periplasmic side of the membrane. The 71-residue stretch at 57-127 (YPIRKVGVDG…DTVVLTVEER (71 aa)) folds into the POTRA domain.

The protein belongs to the FtsQ/DivIB family. FtsQ subfamily. Part of a complex composed of FtsB, FtsL and FtsQ.

The protein localises to the cell inner membrane. Its function is as follows. Essential cell division protein. May link together the upstream cell division proteins, which are predominantly cytoplasmic, with the downstream cell division proteins, which are predominantly periplasmic. May control correct divisome assembly. In Alcanivorax borkumensis (strain ATCC 700651 / DSM 11573 / NCIMB 13689 / SK2), this protein is Cell division protein FtsQ.